Consider the following 206-residue polypeptide: SITELCKTLSAGPLDPNTEVVVGCPAPYLSLARSLLPETIGVAAQNCYKVAKGAFTGEISPAMLKDLGLGWVILGHSERRAIFGETDELIAEKVAHALGEGLKVIACIGETLQEREAGQTEAVCFRQTKAIAAQVKDWSNVVIAYEPVWAIGTGKTATPEQAQEVHAALRKWFTENVSADVSNAIRIQYGGSVTAANCRELAGKPD.

Catalysis depends on H76, which acts as the Electrophile. Catalysis depends on E146, which acts as the Proton acceptor.

The protein belongs to the triosephosphate isomerase family. Homodimer.

The enzyme catalyses D-glyceraldehyde 3-phosphate = dihydroxyacetone phosphate. Its pathway is carbohydrate biosynthesis; gluconeogenesis. It participates in carbohydrate degradation; glycolysis; D-glyceraldehyde 3-phosphate from glycerone phosphate: step 1/1. The polypeptide is Triosephosphate isomerase (Tpi) (Anopheles merus (Mosquito)).